Here is a 295-residue protein sequence, read N- to C-terminus: Methionine aminopeptidase (295 aa).

His-62 serves as a coordination point for substrate. Residues Asp-82, Asp-93, and His-153 each coordinate a divalent metal cation. His-161 contributes to the substrate binding site. A divalent metal cation contacts are provided by Glu-187 and Glu-280.

This sequence belongs to the peptidase M24A family. Methionine aminopeptidase archaeal type 2 subfamily. Monomer. Co(2+) is required as a cofactor. The cofactor is Zn(2+). Mn(2+) serves as cofactor. It depends on Fe(2+) as a cofactor.

It catalyses the reaction Release of N-terminal amino acids, preferentially methionine, from peptides and arylamides.. Functionally, removes the N-terminal methionine from nascent proteins. The N-terminal methionine is often cleaved when the second residue in the primary sequence is small and uncharged (Met-Ala-, Cys, Gly, Pro, Ser, Thr, or Val). The protein is Methionine aminopeptidase of Pyrococcus horikoshii (strain ATCC 700860 / DSM 12428 / JCM 9974 / NBRC 100139 / OT-3).